The primary structure comprises 424 residues: Double-stranded RNA-binding protein 8 (424 aa).

A compositionally biased stretch (pro residues) spans 1–10 (MDMPPTPLPP). Positions 1 to 22 (MDMPPTPLPPETANTSPAPNGA) are disordered. 2 consecutive DRBM domains span residues 33–102 (VFKS…EIVK) and 118–185 (LCKN…AIQG). Basic and acidic residues-rich tracts occupy residues 287 to 308 (KRVE…ENQH) and 318 to 328 (DEARVEQEPSR). Residues 287–330 (KRVEAEPPRDIEMVQPDKENQHSDAALVQPDDEARVEQEPSRDI) are disordered.

In terms of biological role, binds double-stranded RNA. The chain is Double-stranded RNA-binding protein 8 (DRB8) from Oryza sativa subsp. japonica (Rice).